The following is a 78-amino-acid chain: Calcium/calmodulin-dependent protein kinase II inhibitor 1 (78 aa).

The segment at 41–68 is CAMK2 inhibitory domain; sequence SKRPPKLGQIGRSKRVVIEDDRIDDVLK.

The protein belongs to the CAMK2N family. In terms of assembly, interacts with CAMK2B; the presence of Ca(2+)/calmodulin increases the interaction but is not essential. Interacts with CAMK2A; this interaction requires CAMK2A activation by Ca(2+). In terms of tissue distribution, expressed in the brain (at protein level). Expressed in cardiomyocytes but not cardiac fibroblasts (at protein level).

Its subcellular location is the synapse. The protein localises to the cell projection. It is found in the dendrite. It localises to the postsynaptic density. Potent and specific inhibitor of CaM-kinase II (CAMK2). Plays a role in the maintenance of long-term retrieval-induced memory in response to contextual fear. Modulates blood pressure and vascular reactivity via regulation of CAMK2 activity in addition to regulation of left ventricular mass. Mediates the NLRP3 inflammasome in cardiomyocytes via acting as an inhibitor of the MAPK14/p38 and MAPK8/JNK pathways, thereby regulating ventricular remodeling and cardiac rhythm post-myocardial infarction. Negatively effects insulin sensitivity and promotes lipid formation in adipose tissues independent of CAMK2 signaling. The protein is Calcium/calmodulin-dependent protein kinase II inhibitor 1 (Camk2n1) of Mus musculus (Mouse).